A 113-amino-acid chain; its full sequence is U11-theraphotoxin-Hhn1a (113 aa).

A signal peptide spans 1–21 (MNTVRVTFLLVFVLAVSLGQA). A propeptide spanning residues 22 to 74 (DKDENRMEMQEKTEQGNSYLDFAENLLLQKLEELEAKLLEEDSEESRNSRQKR) is cleaved from the precursor. Positions 60–69 (LEEDSEESRN) are enriched in basic and acidic residues. Residues 60-83 (LEEDSEESRNSRQKRCIGEGVPCD) are disordered. Cystine bridges form between C75–C90, C82–C95, and C89–C110.

Belongs to the neurotoxin 14 (magi-1) family. 01 (HNTX-16) subfamily. In terms of tissue distribution, expressed by the venom gland.

It is found in the secreted. Probable ion channel inhibitor. The sequence is that of U11-theraphotoxin-Hhn1a from Cyriopagopus hainanus (Chinese bird spider).